Consider the following 1315-residue polypeptide: Probable nucleoporin C890.06 (1315 aa).

Belongs to the non-repetitive/WGA-negative nucleoporin family.

The protein localises to the cytoplasm. The protein resides in the nucleus. The sequence is that of Probable nucleoporin C890.06 from Schizosaccharomyces pombe (strain 972 / ATCC 24843) (Fission yeast).